A 317-amino-acid polypeptide reads, in one-letter code: Melanocyte-stimulating hormone receptor (317 aa).

Residues 1–26 (MPVQGSPRSLLGAVNSTPTATPHLRP) are disordered. The Extracellular portion of the chain corresponds to 1-37 (MPVQGSPRSLLGAVNSTPTATPHLRPAANQTGPQCLE). The N-linked (GlcNAc...) asparagine glycan is linked to Asn-29. A helical membrane pass occupies residues 38 to 63 (VSIPDGLFLCLGLVSLVENTLVVAAI). Residues 64-72 (AKNRNLHSP) lie on the Cytoplasmic side of the membrane. Residues 73–93 (MYCFVCCLALSDLLVSVSSVL) form a helical membrane-spanning segment. Residues 94-118 (ETAVLLLLGAGALAAQATVVQLLGN) lie on the Extracellular side of the membrane. Residues 119-140 (VIDVLLCSSMVSSLFFLGAIAM) form a helical membrane-spanning segment. Topologically, residues 141–163 (DRYISIFYALRYHSIVTLARARR) are cytoplasmic. A helical transmembrane segment spans residues 164 to 183 (AIAAIWAASMLSSTLFIAYC). At 184–191 (DHTAALLC) the chain is on the extracellular side. Residues 192–211 (LVVFFLAMLVLMAVLYVHML) form a helical membrane-spanning segment. Residues 212 to 240 (TQACQHAQGIARLHKRQRPVQQGWGLKGA) are Cytoplasmic-facing. Residues 241–266 (ATLAILLGVFFLCWGPFFLHLTLIAV) form a helical membrane-spanning segment. Residues 267–279 (CPQHPTCSCIFKN) lie on the Extracellular side of the membrane. Residues 280–300 (FRLFLALIVCNAIVDPLIYAF) form a helical membrane-spanning segment. Residues 301–317 (RSQELCKTLKELLLFSW) are Cytoplasmic-facing.

It belongs to the G-protein coupled receptor 1 family. As to quaternary structure, interacts with MGRN1, but does not undergo MGRN1-mediated ubiquitination; this interaction competes with GNAS-binding and thus inhibits agonist-induced cAMP production. Interacts with OPN3; the interaction results in a decrease in MC1R-mediated cAMP signaling and ultimately a decrease in melanin production in melanocytes.

It is found in the cell membrane. Its function is as follows. Receptor for MSH (alpha, beta and gamma) and ACTH. The activity of this receptor is mediated by G proteins which activate adenylate cyclase. Mediates melanogenesis, the production of eumelanin (black/brown) and phaeomelanin (red/yellow), via regulation of cAMP signaling in melanocytes. The sequence is that of Melanocyte-stimulating hormone receptor (MC1R) from Hapalemur griseus (Gray gentle lemur).